The sequence spans 122 residues: Basic phospholipase A2 vipoxin B chain (122 aa).

7 cysteine pairs are disulfide-bonded: cysteine 26–cysteine 115, cysteine 28–cysteine 44, cysteine 43–cysteine 95, cysteine 49–cysteine 122, cysteine 50–cysteine 88, cysteine 57–cysteine 81, and cysteine 75–cysteine 86. Ca(2+) is bound by residues tyrosine 27, glycine 29, and glycine 31. The active site involves histidine 47. Ca(2+) is bound at residue aspartate 48. Aspartate 89 is a catalytic residue.

This sequence belongs to the phospholipase A2 family. Group II subfamily. D49 sub-subfamily. As to quaternary structure, heterodimer of A (AC P04084) and B chains; non-covalently linked. The A chain (acidic) is non-toxic, and increases the toxicity of the B chain (basic). The A chain may act as factor stabilizing the complex structure and hence retaining its toxicity by preventing non-specific binding. Upon binding to the target membranes the A chain is postulated to dissociate. Ca(2+) is required as a cofactor. Expressed by the venom gland.

It is found in the secreted. The catalysed reaction is a 1,2-diacyl-sn-glycero-3-phosphocholine + H2O = a 1-acyl-sn-glycero-3-phosphocholine + a fatty acid + H(+). Heterodimer: postsynaptic neurotoxin. In terms of biological role, monomer: snake venom phospholipase A2 (PLA2) that shows hemolytic activity and inhibition of platelet aggregation. The hemolytic activity occurs only in presence of fatty acids (unsaturated fatty acids facilitate induce a strong hemolytic activity, whereas saturated fatty acids induce a slight activity). The inhibition of platelet aggregation is almost maximal when aggregation is induced by collagen, and arachidonic acid, whereas it is only of 30% when the aggregation is induced by ADP. PLA2 catalyzes the calcium-dependent hydrolysis of the 2-acyl groups in 3-sn-phosphoglycerides. The protein is Basic phospholipase A2 vipoxin B chain of Vipera ammodytes meridionalis (Eastern sand viper).